The primary structure comprises 202 residues: Dephospho-CoA kinase (202 aa).

The 197-residue stretch at 6–202 (KVSITGDLSS…EYFYALKGAL (197 aa)) folds into the DPCK domain. Residue 14-19 (SSGKTE) participates in ATP binding.

This sequence belongs to the CoaE family.

The protein resides in the cytoplasm. The enzyme catalyses 3'-dephospho-CoA + ATP = ADP + CoA + H(+). It functions in the pathway cofactor biosynthesis; coenzyme A biosynthesis; CoA from (R)-pantothenate: step 5/5. Catalyzes the phosphorylation of the 3'-hydroxyl group of dephosphocoenzyme A to form coenzyme A. This Chlamydia felis (strain Fe/C-56) (Chlamydophila felis) protein is Dephospho-CoA kinase.